A 270-amino-acid chain; its full sequence is UPF0354 protein BCAH820_4810 (270 aa).

The protein belongs to the UPF0354 family.

The polypeptide is UPF0354 protein BCAH820_4810 (Bacillus cereus (strain AH820)).